The following is a 247-amino-acid chain: MQTQVLFEHPLNEKMRTWLRIEFLIQQLTVNLPIVDHAGALHFFRNVSELLDVFERGEVRTELLKELDRQQRKLQTWIGVPGVDQSRIEALIQQLKAAGSVLISAPRIGQFLREDRLIALVRQRLSIPGGCCSFDLPTLHIWLHLPQAQRDSQVETWIASLNPLTQALTMVLDLIRQSAPFRKQTSLNGFYQDNGGDADLLRLNLLLDSQLYPQISGHKSRFAIRFMPLDTENGQVPERLDFELACC.

Belongs to the ZapD family. In terms of assembly, interacts with FtsZ.

It localises to the cytoplasm. Functionally, cell division factor that enhances FtsZ-ring assembly. Directly interacts with FtsZ and promotes bundling of FtsZ protofilaments, with a reduction in FtsZ GTPase activity. This is Cell division protein ZapD from Escherichia coli O139:H28 (strain E24377A / ETEC).